A 98-amino-acid chain; its full sequence is MSLVHMNIALAFTVALLGLLMYRSHLMSSLLCLEGMMLTLFIMGTIMILNTHFTLASMLPIILLVFAACEAAVGLSLLVMVSNTYGVDYVQNLNLLQC.

The next 3 helical transmembrane spans lie at 1–21 (MSLVHMNIALAFTVALLGLLM), 29–49 (SLLCLEGMMLTLFIMGTIMIL), and 61–81 (IILLVFAACEAAVGLSLLVMV).

This sequence belongs to the complex I subunit 4L family. In terms of assembly, core subunit of respiratory chain NADH dehydrogenase (Complex I) which is composed of 45 different subunits.

It is found in the mitochondrion inner membrane. The enzyme catalyses a ubiquinone + NADH + 5 H(+)(in) = a ubiquinol + NAD(+) + 4 H(+)(out). Functionally, core subunit of the mitochondrial membrane respiratory chain NADH dehydrogenase (Complex I) which catalyzes electron transfer from NADH through the respiratory chain, using ubiquinone as an electron acceptor. Part of the enzyme membrane arm which is embedded in the lipid bilayer and involved in proton translocation. This is NADH-ubiquinone oxidoreductase chain 4L (MT-ND4L) from Sorex unguiculatus (Long-clawed shrew).